The following is a 90-amino-acid chain: Small ribosomal subunit protein uS15c (90 aa).

It belongs to the universal ribosomal protein uS15 family. In terms of assembly, part of the 30S ribosomal subunit.

Its subcellular location is the plastid. It localises to the chloroplast. The chain is Small ribosomal subunit protein uS15c (rps15) from Phaseolus vulgaris (Kidney bean).